Consider the following 2451-residue polypeptide: Reducing polyketide synthase 8 (2451 aa).

A Ketosynthase family 3 (KS3) domain is found at 12–434; it reads NEPIAIVGSS…GTNAHAILEA (423 aa). Active-site for beta-ketoacyl synthase activity residues include cysteine 174, histidine 313, and histidine 354. A Malonyl-CoA:ACP transacylase (MAT) domain is found at 538–846; sequence VFTGQGAQWA…GPATETINNM (309 aa). The segment at 940 to 1085 is N-terminal hotdog fold; the sequence is HQLLGSASTF…GFLRIELGAP (146 aa). A PKS/mFAS DH domain is found at 940 to 1254; the sequence is HQLLGSASTF…LLNLPGSLRS (315 aa). Histidine 974 serves as the catalytic Proton acceptor; for dehydratase activity. The C-terminal hotdog fold stretch occupies residues 1100 to 1254; the sequence is LIPLDVEELY…LLNLPGSLRS (155 aa). Aspartate 1160 (proton donor; for dehydratase activity) is an active-site residue. Positions 1294 to 1590 are methyltransfrase (MT) domain; that stretch reads LVLFYCQKVL…QHFCSVMLSQ (297 aa). The Ketoreductase (KR) domain occupies 2088–2266; the sequence is TYLLLGLAGD…PGCVVHIGGV (179 aa). In terms of domain architecture, Carrier spans 2366 to 2451; sequence DACLDLLLGG…LAIWRKQVKA (86 aa). Serine 2404 is subject to O-(pantetheine 4'-phosphoryl)serine.

Pantetheine 4'-phosphate is required as a cofactor.

It functions in the pathway secondary metabolite biosynthesis. Reducing polyketide synthase; part of the gene cluster that mediates the biosynthesis of fusamarins, isocoumarin derivatives that show moderate cytotoxicity with IC(50) values between 1 and 50 uM. The polyketide synthase FMN1 probably synthesizes two different polyketides, a tetra- and a pentaketide, containinga varying number of double bonds depending on the selective actions of the trans-enoyl reductase FMN2. Chain fusion will presumably be mediated by the KS domain before finally offloading is catalyzed by the alpha/beta hydrolase fold enzyme FMN3. This Fusarium mangiferae (Mango malformation disease fungus) protein is Reducing polyketide synthase 8.